Here is a 202-residue protein sequence, read N- to C-terminus: Snake venom metalloproteinase TM-1 (202 aa).

Pyrrolidone carboxylic acid is present on Gln1. One can recognise a Peptidase M12B domain in the interval 7-202 (RYVMLAIVAD…TNPQCILNAP (196 aa)). Cystine bridges form between Cys118/Cys197, Cys159/Cys181, and Cys161/Cys164. Position 143 (His143) interacts with Zn(2+). Glu144 is a catalytic residue. Residues His147 and His153 each coordinate Zn(2+).

The protein belongs to the venom metalloproteinase (M12B) family. P-I subfamily. Monomer. It depends on Zn(2+) as a cofactor. In terms of processing, the N-terminus is blocked. Post-translationally, not glycosylated. As to expression, expressed by the venom gland.

Its subcellular location is the secreted. Its activity is regulated as follows. Inhibited by EDTA and 1,10-phenanthroline. Is also inhibited by endogenous tripeptide inhibitors pyroGlu-Asn-Trp, pyroGlu-Gln-Trp, and pyroGlu-Lys-Trp. Potent fibrinogenolytic protease which cleaves mainly the Aalpha (FGA) and Bbeta (FGB) chains of fibrinogen and slightly the gamma chain (FGG). Shows preference for substrates having a moderate-size and hydrophobic residue at the P1' position. Preferentially cleaves Ala-|-Leu and Tyr-|-Leu bonds. Is more susceptible to tripeptide inhibitors than TM-3 (AC O57413). This chain is Snake venom metalloproteinase TM-1, found in Protobothrops mucrosquamatus (Taiwan habu).